The primary structure comprises 376 residues: Copper-containing nitrite reductase (376 aa).

The segment at residues 1 to 33 is a signal peptide (tat-type signal); it reads MSEQFQMTRRSMLAGAAIAGAVTPLIGAVSAHA. 2 consecutive Plastocyanin-like domains span residues 98-193 and 258-359; these read MTFN…IMVL and GAVG…FAVT. 7 residues coordinate Cu cation: histidine 131, histidine 136, histidine 171, cysteine 172, histidine 181, methionine 186, and histidine 342.

It belongs to the multicopper oxidase family. Homotrimer. Cu(2+) is required as a cofactor. Cu(+) serves as cofactor. It depends on FAD as a cofactor. Post-translationally, predicted to be exported by the Tat system. The position of the signal peptide cleavage has not been experimentally proven.

Its subcellular location is the periplasm. It carries out the reaction nitric oxide + Fe(III)-[cytochrome c] + H2O = Fe(II)-[cytochrome c] + nitrite + 2 H(+). It participates in nitrogen metabolism; nitrate reduction (denitrification); dinitrogen from nitrate: step 2/4. This chain is Copper-containing nitrite reductase (nirK), found in Rhizobium meliloti (strain 1021) (Ensifer meliloti).